A 429-amino-acid polypeptide reads, in one-letter code: Chaperone SurA (429 aa).

The signal sequence occupies residues 1 to 18 (MFKRIALVCALFSGVCFA). 2 consecutive PpiC domains span residues 170–271 (NLTY…KLVA) and 281–380 (ITQT…EVIA).

It localises to the periplasm. It carries out the reaction [protein]-peptidylproline (omega=180) = [protein]-peptidylproline (omega=0). Chaperone involved in the correct folding and assembly of outer membrane proteins. Recognizes specific patterns of aromatic residues and the orientation of their side chains, which are found more frequently in integral outer membrane proteins. May act in both early periplasmic and late outer membrane-associated steps of protein maturation. The protein is Chaperone SurA of Legionella pneumophila (strain Lens).